A 166-amino-acid polypeptide reads, in one-letter code: MSSYARRTPVRTVLNFCTAIRQIITGEAGSVAADKGNRGQKRAPLLHRHRLHAWLYLGSAITTEVTGTVILDFSEGFQLPAQTTAAMALYAFSFFLLTRALRAVPLSVAYATWSGLGTVAVAFAGAIIHGEAVTLGRITAITAVIGGIVILNLATTRQHSARRKDV.

The next 4 membrane-spanning stretches (helical) occupy residues 51–71, 77–97, 108–128, and 133–153; these read LHAW…TVIL, FQLP…FFLL, VAYA…GAII, and VTLG…ILNL.

The protein belongs to the drug/metabolite transporter (DMT) superfamily. Small multidrug resistance (SMR) (TC 2.A.7.1) family. NepA/NepB subfamily. The efflux pump is composed of NepA and NepB.

The protein localises to the cell membrane. In terms of biological role, component of an efflux pump responsible for the transport of nicotine breakdown products, in particular methylamine, out of the cell. This pump apparently serves as a metabolic valve for nicotine catabolites and may protect the bacteria from the potentially toxic side effects of these compounds. In Paenarthrobacter nicotinovorans (Arthrobacter nicotinovorans), this protein is Nicotine metabolites export pump subunit NepB (nepB).